The primary structure comprises 144 residues: Elicitor-responsive protein 3 (144 aa).

In terms of domain architecture, C2 spans Met1–Val103. Positions 20, 26, 73, 75, and 81 each coordinate Ca(2+). Residues Thr123–Ser144 are disordered.

It depends on Ca(2+) as a cofactor.

The protein is Elicitor-responsive protein 3 (ERG3) of Oryza sativa subsp. indica (Rice).